The primary structure comprises 473 residues: Maltose fermentation regulatory protein MAL13 (473 aa).

The segment at residues 13–39 is a DNA-binding region (zn(2)-C6 fungal-type); it reads CDCCRIRRVKCDGKRPCSSCLQNSLDC. The Nuclear localization signal signature appears at 46–54; it reads RKRGPKSIR.

It belongs to the MAL13 family.

It is found in the nucleus. Functionally, regulates the coordinate transcription of structural MAL1S (maltase) and AGT1 (maltose permease) genes. The protein is Maltose fermentation regulatory protein MAL13 (MAL13) of Saccharomyces cerevisiae (strain ATCC 204508 / S288c) (Baker's yeast).